A 301-amino-acid polypeptide reads, in one-letter code: Oxygen-dependent coproporphyrinogen-III oxidase (301 aa).

Ser-90 provides a ligand contact to substrate. Residues His-94 and His-104 each contribute to the a divalent metal cation site. Catalysis depends on His-104, which acts as the Proton donor. 106-108 (NVR) contributes to the substrate binding site. Residues His-143 and His-173 each coordinate a divalent metal cation. The important for dimerization stretch occupies residues 238 to 273 (YVEFNLVWDRGTLFGLQSGGRTESILMSLPPVVKWR). 256–258 (GGR) is a substrate binding site.

The protein belongs to the aerobic coproporphyrinogen-III oxidase family. As to quaternary structure, homodimer. The cofactor is a divalent metal cation.

It localises to the cytoplasm. It carries out the reaction coproporphyrinogen III + O2 + 2 H(+) = protoporphyrinogen IX + 2 CO2 + 2 H2O. The protein operates within porphyrin-containing compound metabolism; protoporphyrin-IX biosynthesis; protoporphyrinogen-IX from coproporphyrinogen-III (O2 route): step 1/1. In terms of biological role, involved in the heme biosynthesis. Catalyzes the aerobic oxidative decarboxylation of propionate groups of rings A and B of coproporphyrinogen-III to yield the vinyl groups in protoporphyrinogen-IX. The chain is Oxygen-dependent coproporphyrinogen-III oxidase from Nitrosomonas europaea (strain ATCC 19718 / CIP 103999 / KCTC 2705 / NBRC 14298).